Here is a 419-residue protein sequence, read N- to C-terminus: Esterase FrsA (419 aa).

Belongs to the FrsA family.

It carries out the reaction a carboxylic ester + H2O = an alcohol + a carboxylate + H(+). Functionally, catalyzes the hydrolysis of esters. The polypeptide is Esterase FrsA (Photobacterium profundum (strain SS9)).